A 386-amino-acid polypeptide reads, in one-letter code: D-amino-acid oxidase (386 aa).

FAD is bound by residues Gly14, Gly15, Val16, Val17, Glu39, Arg40, Ala51, Gly52, and Gly53. The tract at residues 109-138 (SSSPPHPLLPPWVDPSASAAPPRELGTPDT) is disordered. Over residues 112-121 (PPHPLLPPWV) the composition is skewed to pro residues. FAD contacts are provided by Arg174, Val175, and Ala176. 3 residues coordinate D-serine: Tyr253, Tyr261, and Lys332. The D-proline site is built by Tyr261 and Lys332. 5 residues coordinate FAD: Lys332, Gly344, Ile345, Gly362, and Ala364. Position 332 (Lys332) interacts with D-dopa. D-serine is bound at residue Gly362. Gly362 provides a ligand contact to D-proline. Gly362 serves as a coordination point for D-dopa.

It belongs to the DAMOX/DASOX family.

It carries out the reaction a D-alpha-amino acid + O2 + H2O = a 2-oxocarboxylate + H2O2 + NH4(+). The catalysed reaction is D-alanine + O2 + H2O = pyruvate + H2O2 + NH4(+). The enzyme catalyses D-aspartate + O2 + H2O = oxaloacetate + H2O2 + NH4(+). Its function is as follows. Catalyzes the oxidative deamination of D-amino acids with broad substrate specificity. Enables the organism to utilize D-amino acids as a source of nutrients. This Zea mays (Maize) protein is D-amino-acid oxidase.